The sequence spans 209 residues: MTLASQIASDLLDIKAVYLKPEEPFTWASGIKSPIYTDNRITLSYPETRTLIENGFVKKIKEEFPEVEVIAGTATAGIPHGAIIADKMNLPFAYIRSKPKDHGAGNQIEGRVVKGEKMVVVEDLISTGGSVLDAVAAAEREGADVIGVVAIFTYELPKAEKNFAEAGVKLVTLSNYTELIKVAKVKGYITADGLQLLKKFKENQETWQD.

Residues Arg96, Lys100, His102, and 122–130 (EDLISTGGS) contribute to the 5-phospho-alpha-D-ribose 1-diphosphate site. Ser126 lines the orotate pocket.

It belongs to the purine/pyrimidine phosphoribosyltransferase family. PyrE subfamily. Homodimer. The cofactor is Mg(2+).

The catalysed reaction is orotidine 5'-phosphate + diphosphate = orotate + 5-phospho-alpha-D-ribose 1-diphosphate. The protein operates within pyrimidine metabolism; UMP biosynthesis via de novo pathway; UMP from orotate: step 1/2. In terms of biological role, catalyzes the transfer of a ribosyl phosphate group from 5-phosphoribose 1-diphosphate to orotate, leading to the formation of orotidine monophosphate (OMP). The chain is Orotate phosphoribosyltransferase from Streptococcus thermophilus (strain ATCC BAA-491 / LMD-9).